The primary structure comprises 350 residues: UDP-glucose 4-epimerase GEPI48 (350 aa).

5–36 serves as a coordination point for NAD(+); the sequence is TVLVTGGAGYIGSHTVLQLLLGGFKAVVVDNL. Serine 130 is a binding site for substrate. Tyrosine 154 serves as the catalytic Proton acceptor.

It belongs to the NAD(P)-dependent epimerase/dehydratase family. The cofactor is NAD(+).

The enzyme catalyses UDP-alpha-D-glucose = UDP-alpha-D-galactose. Its pathway is carbohydrate metabolism; galactose metabolism. In Cyamopsis tetragonoloba (Guar), this protein is UDP-glucose 4-epimerase GEPI48.